We begin with the raw amino-acid sequence, 273 residues long: MNNRVHQGHLARKRFGQNFLNDQFVIDSIVSAINPQKGQAMVEIGPGLAALTEPVGERLDQLTVIELDRDLAARLQTHPFLGPKLTIYQQDAMTFNFGELAEKMGQPLHVFGNLPYNISTPLMFHLFSYTDAIADMHFMLQKEVVNRLVAGPNSKVYGRLSVMAQYYCNVIPVLEVPPSAFTPPPKVDSAVVRLVPHATMPHPVKDVRVLSRITTEAFNQRRKTIRNSLGNLFSVEVLTGMGIDPAMRAENISVAQYCQMANYLAENAPLQES.

6 residues coordinate S-adenosyl-L-methionine: Asn18, Leu20, Gly45, Glu66, Asp91, and Asn113.

It belongs to the class I-like SAM-binding methyltransferase superfamily. rRNA adenine N(6)-methyltransferase family. RsmA subfamily.

It is found in the cytoplasm. The catalysed reaction is adenosine(1518)/adenosine(1519) in 16S rRNA + 4 S-adenosyl-L-methionine = N(6)-dimethyladenosine(1518)/N(6)-dimethyladenosine(1519) in 16S rRNA + 4 S-adenosyl-L-homocysteine + 4 H(+). Its function is as follows. Specifically dimethylates two adjacent adenosines (A1518 and A1519) in the loop of a conserved hairpin near the 3'-end of 16S rRNA in the 30S particle. May play a critical role in biogenesis of 30S subunits. This is Ribosomal RNA small subunit methyltransferase A from Shigella dysenteriae serotype 1 (strain Sd197).